Consider the following 253-residue polypeptide: 3-deoxy-manno-octulosonate cytidylyltransferase (253 aa).

This sequence belongs to the KdsB family.

It localises to the cytoplasm. It carries out the reaction 3-deoxy-alpha-D-manno-oct-2-ulosonate + CTP = CMP-3-deoxy-beta-D-manno-octulosonate + diphosphate. Its pathway is nucleotide-sugar biosynthesis; CMP-3-deoxy-D-manno-octulosonate biosynthesis; CMP-3-deoxy-D-manno-octulosonate from 3-deoxy-D-manno-octulosonate and CTP: step 1/1. The protein operates within bacterial outer membrane biogenesis; lipopolysaccharide biosynthesis. Its function is as follows. Activates KDO (a required 8-carbon sugar) for incorporation into bacterial lipopolysaccharide in Gram-negative bacteria. This chain is 3-deoxy-manno-octulosonate cytidylyltransferase, found in Acinetobacter baumannii (strain ATCC 17978 / DSM 105126 / CIP 53.77 / LMG 1025 / NCDC KC755 / 5377).